Consider the following 350-residue polypeptide: UDP-glucose 4-epimerase (350 aa).

Residue 7–38 (KILVTGSAGFIGTHTVVQLLNNGFNVSIIDNF) participates in NAD(+) binding. Serine 133 serves as a coordination point for substrate. Tyrosine 157 functions as the Proton acceptor in the catalytic mechanism.

It belongs to the NAD(P)-dependent epimerase/dehydratase family. It depends on NAD(+) as a cofactor.

The catalysed reaction is UDP-alpha-D-glucose = UDP-alpha-D-galactose. It functions in the pathway carbohydrate metabolism; galactose metabolism. In Pisum sativum (Garden pea), this protein is UDP-glucose 4-epimerase (GALE).